Reading from the N-terminus, the 449-residue chain is MMEKHGGKVTSDRRAGRRQHGQRCSASDAAPLVVVVILIVAALFLILGPTGSSSFTVPRIRVVFNEPVHVAVAAPPPPPPPAQMQAGANASSEEDSGLPPPRQLTDPPYSLGRTILGYDARRSAWLAAHPEFPARVAPAGRPRVLVVTGSAPARCPDPDGDHLLLRAFKNKVDYCRIHGLDVFYNTAFLDAEMSGFWAKLPLLRMLMVAHPEAELIWWVDSDAVFTDMLFEIPWERYAVHNLVLHGWEAKVFDEKSWIGVNTGSFLIRNCQWSLDLLDAWAPMGPRGPVRDRYGELFAEELSGRPPFEADDQSALIYLLVTQRQRWGDKVFIESSYDLNGFWEGIVDKYEELRRAGRDDGRWPFVTHFVGCKPCRRYADSYPAERCRRGMERAFNFADDQILKLYGFAHESLNTTAVRRVRNETGEPLDAGDEELGRLLHPTFRAARPT.

Basic and acidic residues predominate over residues 1–14 (MMEKHGGKVTSDRR). The segment at 1-24 (MMEKHGGKVTSDRRAGRRQHGQRC) is disordered. Topologically, residues 1–28 (MMEKHGGKVTSDRRAGRRQHGQRCSASD) are cytoplasmic. Residues 29 to 49 (AAPLVVVVILIVAALFLILGP) traverse the membrane as a helical; Signal-anchor for type II membrane protein segment. Residues 50–449 (TGSSSFTVPR…HPTFRAARPT (400 aa)) are Lumenal-facing. The tract at residues 74–109 (APPPPPPPAQMQAGANASSEEDSGLPPPRQLTDPPY) is disordered. 3 N-linked (GlcNAc...) asparagine glycosylation sites follow: N89, N413, and N422.

The protein belongs to the glycosyltransferase 34 family.

It localises to the golgi apparatus membrane. In terms of biological role, probable glycosyltransferase that may be involved in the biosynthesis of xyloglucan. The polypeptide is Probable glycosyltransferase 5 (Oryza sativa subsp. japonica (Rice)).